Reading from the N-terminus, the 467-residue chain is Ribosomal RNA small subunit methyltransferase F (467 aa).

S-adenosyl-L-methionine-binding positions include 119-125, Glu-143, Asp-170, and Asp-188; that span reads ASAPGSK. Cys-241 (nucleophile) is an active-site residue.

It belongs to the class I-like SAM-binding methyltransferase superfamily. RsmB/NOP family.

Its subcellular location is the cytoplasm. It carries out the reaction cytidine(1407) in 16S rRNA + S-adenosyl-L-methionine = 5-methylcytidine(1407) in 16S rRNA + S-adenosyl-L-homocysteine + H(+). In terms of biological role, specifically methylates the cytosine at position 1407 (m5C1407) of 16S rRNA. This chain is Ribosomal RNA small subunit methyltransferase F, found in Shewanella amazonensis (strain ATCC BAA-1098 / SB2B).